We begin with the raw amino-acid sequence, 559 residues long: POU domain protein 1 (559 aa).

Residues glutamate 259 to aspartate 333 enclose the POU-specific domain. The homeobox DNA-binding region spans lysine 351 to threonine 410.

The protein belongs to the POU transcription factor family.

The protein localises to the nucleus. In Dugesia japonica (Planarian), this protein is POU domain protein 1 (POU1).